The chain runs to 369 residues: Glycolate oxidase (369 aa).

Methionine 1 is modified (N-acetylmethionine). Positions 1-359 (MEITNVNEYE…SRSHIAADWD (359 aa)) constitute an FMN hydroxy acid dehydrogenase domain. Residue tyrosine 24 participates in glyoxylate binding. FMN contacts are provided by residues 77–79 (PTA), serine 106, 127–129 (QLY), and threonine 155. Tyrosine 129 contacts glyoxylate. Arginine 164 provides a ligand contact to glyoxylate. The FMN site is built by lysine 230 and serine 252. Glyoxylate is bound by residues histidine 254 and arginine 257. Histidine 254 (proton acceptor) is an active-site residue. FMN contacts are provided by residues 285–289 (DGGVR) and 308–309 (GR). A Microbody targeting signal motif is present at residues 367-369 (ARL).

Belongs to the FMN-dependent alpha-hydroxy acid dehydrogenase family. As to quaternary structure, homotetramer. FMN serves as cofactor.

Its subcellular location is the peroxisome. The enzyme catalyses glycolate + O2 = glyoxylate + H2O2. It carries out the reaction a (2S)-2-hydroxycarboxylate + O2 = a 2-oxocarboxylate + H2O2. Its pathway is photosynthesis; photorespiration; glycine from 2-phosphoglycolate: step 2/3. In terms of biological role, catalyzes the oxidation of glycolate to glyoxylate, with a reduction of O2 to H2O2. Is a key enzyme in photorespiration in green plants. To a lesser extent, is also able to use L-lactate and 2-hydroxbyutanoate as substrate in vitro, but shows almost no activity with L-mandelate. The protein is Glycolate oxidase of Spinacia oleracea (Spinach).